Consider the following 224-residue polypeptide: Protein PLANT CADMIUM RESISTANCE 6 (224 aa).

Residues 131–151 form a helical membrane-spanning segment; it reads GMLYGLICCLFAIPCVYTCTF.

The protein belongs to the cornifelin family.

Its subcellular location is the membrane. In terms of biological role, may be involved in heavy metals transport. In Arabidopsis thaliana (Mouse-ear cress), this protein is Protein PLANT CADMIUM RESISTANCE 6 (PCR6).